Reading from the N-terminus, the 257-residue chain is Putative hydro-lyase Bcen2424_3550 (257 aa).

The protein belongs to the D-glutamate cyclase family.

This Burkholderia cenocepacia (strain HI2424) protein is Putative hydro-lyase Bcen2424_3550.